Consider the following 589-residue polypeptide: Protein kinase G11A (589 aa).

A disordered region spans residues 1–167 (MASKAMPRAP…SACSSISSVT (167 aa)). 2 stretches are compositionally biased toward polar residues: residues 15-36 (NLQS…SPSK) and 63-76 (TQHQ…TGSN). The span at 91–100 (RLADEEKGVV) shows a compositional bias: basic and acidic residues. The span at 142 to 165 (SSSRCRPSTSSDVSDESACSSISS) shows a compositional bias: low complexity. The region spanning 195–533 (FKLLKKLGCG…ATEIKQHPFF (339 aa)) is the Protein kinase domain. ATP contacts are provided by residues 201-209 (LGCGDIGSV) and Lys224. Catalysis depends on Asp320, which acts as the Proton acceptor. A disordered region spans residues 551–589 (RPVEIERPPKQPVSTSEPAAAPSDAAQKSSDSYLEFDFF).

This sequence belongs to the protein kinase superfamily. Ser/Thr protein kinase family.

It catalyses the reaction L-seryl-[protein] + ATP = O-phospho-L-seryl-[protein] + ADP + H(+). The catalysed reaction is L-threonyl-[protein] + ATP = O-phospho-L-threonyl-[protein] + ADP + H(+). Functionally, may play a role in the regulation of metabolism and signal transduction processes. This is Protein kinase G11A from Oryza sativa subsp. japonica (Rice).